A 250-amino-acid polypeptide reads, in one-letter code: Indole-3-glycerol phosphate synthase (250 aa).

This sequence belongs to the TrpC family.

It catalyses the reaction 1-(2-carboxyphenylamino)-1-deoxy-D-ribulose 5-phosphate + H(+) = (1S,2R)-1-C-(indol-3-yl)glycerol 3-phosphate + CO2 + H2O. It functions in the pathway amino-acid biosynthesis; L-tryptophan biosynthesis; L-tryptophan from chorismate: step 4/5. This Bacillus velezensis (strain DSM 23117 / BGSC 10A6 / LMG 26770 / FZB42) (Bacillus amyloliquefaciens subsp. plantarum) protein is Indole-3-glycerol phosphate synthase.